The sequence spans 496 residues: Tyrosine-protein kinase Srms (496 aa).

The region spanning 55–116 (PRARLFRALY…PVTYLAKATP (62 aa)) is the SH3 domain. The SH2 domain maps to 124–216 (WYFSGISRAQ…LIQNPLLQPC (93 aa)). The region spanning 234-495 (FVLRRKLGEG…AINRRLHLGL (262 aa)) is the Protein kinase domain. Residues 240 to 248 (LGEGFFGEV) and Lys-262 each bind ATP. The active-site Proton acceptor is Asp-354. A Phosphotyrosine; by autocatalysis modification is found at Tyr-384.

This sequence belongs to the protein kinase superfamily. Tyr protein kinase family. SRC subfamily. In terms of assembly, interacts (via the SH2 and SH3 domains) with DOK1. Interacts with KHDRBS1/SAM68 and VIM. Higher expression in liver, lung, thymus and skin than in brain, kidney, heart and spleen. In skin, highly expressed in keratinocytes. Abundant in lung, liver, spleen, kidney and testis and is also detected in the cerebrum.

The protein resides in the cytoplasm. The catalysed reaction is L-tyrosyl-[protein] + ATP = O-phospho-L-tyrosyl-[protein] + ADP + H(+). Non-receptor tyrosine-protein kinase which phosphorylates DOK1 on tyrosine residues. Also phosphorylates KHDRBS1/SAM68 and VIM on tyrosine residues. Phosphorylation of KHDRBS1 is EGF-dependent. Phosphorylates OTUB1, promoting deubiquitination of RPTOR. The polypeptide is Tyrosine-protein kinase Srms (Srms) (Mus musculus (Mouse)).